A 121-amino-acid chain; its full sequence is Small ribosomal subunit protein uS13 (121 aa).

A disordered region spans residues 91 to 121 (HRRGLPVRGQNSKNNARTRKGPRRTVANKKK). Residues 106-121 (ARTRKGPRRTVANKKK) are compositionally biased toward basic residues.

The protein belongs to the universal ribosomal protein uS13 family. In terms of assembly, part of the 30S ribosomal subunit. Forms a loose heterodimer with protein S19. Forms two bridges to the 50S subunit in the 70S ribosome.

Its function is as follows. Located at the top of the head of the 30S subunit, it contacts several helices of the 16S rRNA. In the 70S ribosome it contacts the 23S rRNA (bridge B1a) and protein L5 of the 50S subunit (bridge B1b), connecting the 2 subunits; these bridges are implicated in subunit movement. Contacts the tRNAs in the A and P-sites. This Bacillus cereus (strain G9842) protein is Small ribosomal subunit protein uS13.